Here is an 84-residue protein sequence, read N- to C-terminus: MTDKIRTLQGRVVSDKMEKSIVVAIERMVKHPVYGKFIKRTTKLHVHDENNECGIGDKVEIRECRPLSKTKSWTLVRVVEKAVL.

This sequence belongs to the universal ribosomal protein uS17 family. Part of the 30S ribosomal subunit.

Its function is as follows. One of the primary rRNA binding proteins, it binds specifically to the 5'-end of 16S ribosomal RNA. The chain is Small ribosomal subunit protein uS17 from Klebsiella pneumoniae subsp. pneumoniae (strain ATCC 700721 / MGH 78578).